The sequence spans 308 residues: Elongation factor Ts (308 aa).

The involved in Mg(2+) ion dislocation from EF-Tu stretch occupies residues 80–83; the sequence is TDFV.

This sequence belongs to the EF-Ts family.

The protein localises to the cytoplasm. Associates with the EF-Tu.GDP complex and induces the exchange of GDP to GTP. It remains bound to the aminoacyl-tRNA.EF-Tu.GTP complex up to the GTP hydrolysis stage on the ribosome. The sequence is that of Elongation factor Ts from Allorhizobium ampelinum (strain ATCC BAA-846 / DSM 112012 / S4) (Agrobacterium vitis (strain S4)).